Consider the following 300-residue polypeptide: uncharacterized protein (300 aa).

Helical transmembrane passes span Leu13–Leu35, Met45–Ser67, Trp80–Leu102, Gly106–Leu128, Ile180–Leu202, Tyr217–Leu236, Pro243–Val265, and Tyr275–Leu294.

Belongs to the EamA transporter family.

It localises to the cell membrane. This is an uncharacterized protein from Haemophilus influenzae (strain ATCC 51907 / DSM 11121 / KW20 / Rd).